The chain runs to 25 residues: Bacteriocin mutacin F-59.1 (25 aa).

Cys9 and Xaa14 are disulfide-bonded.

Its subcellular location is the secreted. Its function is as follows. Bactericidal activity against a wide range of pathogenic bacteria, including Bacillus spp., Enterococcus spp., Listeria spp., Staphylococcus spp. and Streptococcus spp. Has no activity against Lactobacillus salivarius, Staphylococcus aureus, Streptococcus pyogenes and Streptococcus suis. The polypeptide is Bacteriocin mutacin F-59.1 (Streptococcus mutans).